The chain runs to 92 residues: Turripeptide UID-02 (92 aa).

Residues 1–21 form the signal peptide; it reads MGFYMLLTVALLLTSLMNVEA. Positions 22–39 are excised as a propeptide; sequence TPVDQAERSALEKSGLGN.

Expressed by the venom duct.

It localises to the secreted. This Gemmula speciosa (Splendid gem-turris) protein is Turripeptide UID-02.